A 229-amino-acid chain; its full sequence is Orotidine 5'-phosphate decarboxylase (229 aa).

Substrate contacts are provided by residues aspartate 10, lysine 32, 59-68, threonine 119, arginine 180, glutamine 189, glycine 209, and arginine 210; that span reads DLKFHDIPNT. Lysine 61 functions as the Proton donor in the catalytic mechanism.

The protein belongs to the OMP decarboxylase family. Type 1 subfamily. As to quaternary structure, homodimer.

The enzyme catalyses orotidine 5'-phosphate + H(+) = UMP + CO2. The protein operates within pyrimidine metabolism; UMP biosynthesis via de novo pathway; UMP from orotate: step 2/2. Catalyzes the decarboxylation of orotidine 5'-monophosphate (OMP) to uridine 5'-monophosphate (UMP). The protein is Orotidine 5'-phosphate decarboxylase of Legionella pneumophila subsp. pneumophila (strain Philadelphia 1 / ATCC 33152 / DSM 7513).